The following is a 95-amino-acid chain: MNEVVNSGVMNIASLVVSVVVLLIGLILWFFINRASSRTNEQIELLEALLDQQKRQNALLRRLCEANEPEKADKKTVESQKSVEDEDIIRLVAER.

The chain crosses the membrane as a helical span at residues 12–32; sequence IASLVVSVVVLLIGLILWFFI.

It is found in the cell membrane. This is an uncharacterized protein from Escherichia coli O6:H1 (strain CFT073 / ATCC 700928 / UPEC).